Consider the following 521-residue polypeptide: Cytochrome P450 1A1 (521 aa).

F229 serves as a coordination point for substrate. C463 provides a ligand contact to heme.

It belongs to the cytochrome P450 family. The cofactor is heme.

It is found in the endoplasmic reticulum membrane. It localises to the microsome membrane. The catalysed reaction is an organic molecule + reduced [NADPH--hemoprotein reductase] + O2 = an alcohol + oxidized [NADPH--hemoprotein reductase] + H2O + H(+). Its function is as follows. Cytochromes P450 are a group of heme-thiolate monooxygenases. They oxidize a variety of structurally unrelated compounds, including steroids, fatty acids, and xenobiotics. In Chelon saliens (Leaping mullet), this protein is Cytochrome P450 1A1 (cyp1a1).